A 142-amino-acid polypeptide reads, in one-letter code: Large ribosomal subunit protein uL13 (142 aa).

It belongs to the universal ribosomal protein uL13 family. As to quaternary structure, part of the 50S ribosomal subunit.

This protein is one of the early assembly proteins of the 50S ribosomal subunit, although it is not seen to bind rRNA by itself. It is important during the early stages of 50S assembly. In Laribacter hongkongensis (strain HLHK9), this protein is Large ribosomal subunit protein uL13.